A 69-amino-acid polypeptide reads, in one-letter code: VLIIAVLFLTACQLTTAETSSRGKQKHRALRSTDKYSRMTKHCTPPEVGCLFAYECCSKICWRPRCYPS.

The first 17 residues, 1–17, serve as a signal peptide directing secretion; it reads VLIIAVLFLTACQLTTA. Positions 18–40 are excised as a propeptide; that stretch reads ETSSRGKQKHRALRSTDKYSRMT. 3 cysteine pairs are disulfide-bonded: Cys-43/Cys-57, Cys-50/Cys-61, and Cys-56/Cys-66.

The protein belongs to the conotoxin O1 superfamily. Expressed by the venom duct.

Its subcellular location is the secreted. The protein is Conotoxin AbVIE of Conus abbreviatus (Abbreviated cone).